Here is a 213-residue protein sequence, read N- to C-terminus: Pyrrolidone-carboxylate peptidase (213 aa).

Catalysis depends on residues Glu-80, Cys-143, and His-165.

This sequence belongs to the peptidase C15 family. Homotetramer.

The protein localises to the cytoplasm. It catalyses the reaction Release of an N-terminal pyroglutamyl group from a polypeptide, the second amino acid generally not being Pro.. Functionally, removes 5-oxoproline from various penultimate amino acid residues except L-proline. The polypeptide is Pyrrolidone-carboxylate peptidase (Erwinia tasmaniensis (strain DSM 17950 / CFBP 7177 / CIP 109463 / NCPPB 4357 / Et1/99)).